Reading from the N-terminus, the 131-residue chain is Steroid Delta-isomerase (131 aa).

The Proton donor role is filled by Y16. The Proton acceptor role is filled by D40. D103 contributes to the substrate binding site.

Homodimer.

The enzyme catalyses a 3-oxo-Delta(5)-steroid = a 3-oxo-Delta(4)-steroid. This is Steroid Delta-isomerase (ksi) from Pseudomonas putida (Arthrobacter siderocapsulatus).